Consider the following 279-residue polypeptide: Urease accessory protein UreD (279 aa).

This sequence belongs to the UreD family. In terms of assembly, ureD, UreF and UreG form a complex that acts as a GTP-hydrolysis-dependent molecular chaperone, activating the urease apoprotein by helping to assemble the nickel containing metallocenter of UreC. The UreE protein probably delivers the nickel.

Its subcellular location is the cytoplasm. In terms of biological role, required for maturation of urease via the functional incorporation of the urease nickel metallocenter. In Streptococcus thermophilus (strain ATCC BAA-250 / LMG 18311), this protein is Urease accessory protein UreD.